A 379-amino-acid chain; its full sequence is uncharacterized protein (379 aa).

This sequence belongs to the glycosyltransferase 28 family.

This is an uncharacterized protein from Methanosarcina acetivorans (strain ATCC 35395 / DSM 2834 / JCM 12185 / C2A).